Reading from the N-terminus, the 433-residue chain is Serine--tRNA ligase (433 aa).

235-237 (TSE) provides a ligand contact to L-serine. Residue 266–268 (RSE) coordinates ATP. Glu289 provides a ligand contact to L-serine. 353–356 (EISS) is a binding site for ATP. Residue Ser388 coordinates L-serine.

The protein belongs to the class-II aminoacyl-tRNA synthetase family. Type-1 seryl-tRNA synthetase subfamily. In terms of assembly, homodimer. The tRNA molecule binds across the dimer.

The protein resides in the cytoplasm. The catalysed reaction is tRNA(Ser) + L-serine + ATP = L-seryl-tRNA(Ser) + AMP + diphosphate + H(+). It carries out the reaction tRNA(Sec) + L-serine + ATP = L-seryl-tRNA(Sec) + AMP + diphosphate + H(+). It functions in the pathway aminoacyl-tRNA biosynthesis; selenocysteinyl-tRNA(Sec) biosynthesis; L-seryl-tRNA(Sec) from L-serine and tRNA(Sec): step 1/1. In terms of biological role, catalyzes the attachment of serine to tRNA(Ser). Is also able to aminoacylate tRNA(Sec) with serine, to form the misacylated tRNA L-seryl-tRNA(Sec), which will be further converted into selenocysteinyl-tRNA(Sec). The sequence is that of Serine--tRNA ligase from Burkholderia pseudomallei (strain 1106a).